We begin with the raw amino-acid sequence, 28 residues long: AIMDTIKDTAKTVAVGLLNKLKCKITGC.

Cys-23 and Cys-28 are disulfide-bonded.

In terms of tissue distribution, expressed by the skin glands.

It localises to the secreted. Mast cell degranulating peptide. Causes histamine release from rat peritoneal mast cells in vitro. Has antibacterial activity against the Gram-negative bacterium E.coli K12 and Gram-positive bacterium M.luteus NCT C2665. This is Ranatuerin-2SEb from Lithobates sevosus (Dusky gopher frog).